Consider the following 266-residue polypeptide: Putative expansin-A30 (266 aa).

A signal peptide spans 1-24 (MAAASSTTATTAILAAVIISLAGA). The region spanning 55–170 (GGACGYGNLY…RRVPCARAGG (116 aa)) is the Expansin-like EG45 domain. One can recognise an Expansin-like CBD domain in the interval 180–261 (YWLLAYVMNV…SWCFGLTYQA (82 aa)).

The protein belongs to the expansin family. Expansin A subfamily.

It localises to the secreted. The protein localises to the cell wall. The protein resides in the membrane. In terms of biological role, may cause loosening and extension of plant cell walls by disrupting non-covalent bonding between cellulose microfibrils and matrix glucans. No enzymatic activity has been found. May be required for rapid internodal elongation in deepwater rice during submergence. This is Putative expansin-A30 (EXPA30) from Oryza sativa subsp. japonica (Rice).